The primary structure comprises 237 residues: Ribosomal RNA small subunit methyltransferase G (237 aa).

S-adenosyl-L-methionine is bound by residues Gly-78, Phe-83, 129 to 130 (AE), and Arg-148.

This sequence belongs to the methyltransferase superfamily. RNA methyltransferase RsmG family.

The protein localises to the cytoplasm. Functionally, specifically methylates the N7 position of a guanine in 16S rRNA. The protein is Ribosomal RNA small subunit methyltransferase G of Streptococcus equi subsp. zooepidemicus (strain H70).